Consider the following 261-residue polypeptide: Enolase-phosphatase E1 (261 aa).

Mg(2+) is bound by residues Asp16 and Glu18. Residues 153–154 (SS) and Lys187 each bind substrate. Mg(2+) is bound at residue Asp212.

Belongs to the HAD-like hydrolase superfamily. MasA/MtnC family. As to quaternary structure, monomer. Mg(2+) serves as cofactor.

The protein localises to the cytoplasm. The protein resides in the nucleus. It catalyses the reaction 5-methylsulfanyl-2,3-dioxopentyl phosphate + H2O = 1,2-dihydroxy-5-(methylsulfanyl)pent-1-en-3-one + phosphate. Its pathway is amino-acid biosynthesis; L-methionine biosynthesis via salvage pathway; L-methionine from S-methyl-5-thio-alpha-D-ribose 1-phosphate: step 3/6. The protein operates within amino-acid biosynthesis; L-methionine biosynthesis via salvage pathway; L-methionine from S-methyl-5-thio-alpha-D-ribose 1-phosphate: step 4/6. Functionally, bifunctional enzyme that catalyzes the enolization of 2,3-diketo-5-methylthiopentyl-1-phosphate (DK-MTP-1-P) into the intermediate 2-hydroxy-3-keto-5-methylthiopentenyl-1-phosphate (HK-MTPenyl-1-P), which is then dephosphorylated to form the acireductone 1,2-dihydroxy-3-keto-5-methylthiopentene (DHK-MTPene). The polypeptide is Enolase-phosphatase E1 (Homo sapiens (Human)).